Reading from the N-terminus, the 83-residue chain is uncharacterized protein (83 aa).

This is an uncharacterized protein from Escherichia phage 186 (Bacteriophage 186).